We begin with the raw amino-acid sequence, 603 residues long: Myotubularin (603 aa).

A compositionally biased stretch (polar residues) spans 1 to 13 (MASASTSKYNSHS). The disordered stretch occupies residues 1-25 (MASASTSKYNSHSLENESIKRTSRD). Residues S13 and S18 each carry the phosphoserine modification. Over residues 14–25 (LENESIKRTSRD) the composition is skewed to basic and acidic residues. The GRAM domain maps to 29-97 (RDLTEAVPRL…GVISRIEKMG (69 aa)). The region spanning 163-538 (GWTVYNPVEE…RHLELWVNYY (376 aa)) is the Myotubularin phosphatase domain. The a 1,2-diacyl-sn-glycero-3-phospho-(1D-myo-inositol-3,5-bisphosphate) site is built by N288, N313, and I314. A 1,2-diacyl-sn-glycero-3-phospho-(1D-myo-inositol-3-phosphate) contacts are provided by N288, N313, and I314. Catalysis depends on C375, which acts as the Phosphocysteine intermediate. Residues S376, D377, G378, W379, D380, R381, K417, and R421 each contribute to the a 1,2-diacyl-sn-glycero-3-phospho-(1D-myo-inositol-3,5-bisphosphate) site. The a 1,2-diacyl-sn-glycero-3-phospho-(1D-myo-inositol-3-phosphate) site is built by S376, D377, G378, W379, D380, and R381. A 1,2-diacyl-sn-glycero-3-phospho-(1D-myo-inositol-3-phosphate) is bound at residue R421. T495 is modified (phosphothreonine). The disordered stretch occupies residues 579 to 603 (SAKLSDPPTSPSSPSQMMPHVQTHF). At S588 the chain carries Phosphoserine.

Belongs to the protein-tyrosine phosphatase family. Non-receptor class myotubularin subfamily. As to quaternary structure, heterodimer with MTMR12. Interacts with KMT2A/MLL1 (via SET domain). Interacts with DES in skeletal muscle but not in cardiac muscle. Interacts with SPEG.

Its subcellular location is the cytoplasm. The protein resides in the cell membrane. The protein localises to the cell projection. It is found in the filopodium. It localises to the ruffle. Its subcellular location is the late endosome. The protein resides in the myofibril. The protein localises to the sarcomere. It catalyses the reaction a 1,2-diacyl-sn-glycero-3-phospho-(1D-myo-inositol-3-phosphate) + H2O = a 1,2-diacyl-sn-glycero-3-phospho-(1D-myo-inositol) + phosphate. The catalysed reaction is a 1,2-diacyl-sn-glycero-3-phospho-(1D-myo-inositol-3,5-bisphosphate) + H2O = a 1,2-diacyl-sn-glycero-3-phospho-(1D-myo-inositol-5-phosphate) + phosphate. The enzyme catalyses 1,2-dioctanoyl-sn-glycero-3-phospho-(1-D-myo-inositol-3-phosphate) + H2O = 1,2-dioctanoyl-sn-glycero-3-phospho-(1D-myo-inositol) + phosphate. It carries out the reaction 1,2-dioctanoyl-sn-glycero-3-phospho-(1D-myo-inositol-3,5-bisphosphate) + H2O = 1,2-dioctanoyl-sn-glycero-3-phospho-(1D-myo-inositol-5-phosphate) + phosphate. It catalyses the reaction 1,2-dihexadecanoyl-sn-glycero-3-phospho-(1D-myo-inositol-3,5-phosphate) + H2O = 1,2-dihexadecanoyl-sn-glycero-3-phospho-(1D-myo-inositol-5-phosphate) + phosphate. Its activity is regulated as follows. Allosterically activated by phosphatidylinositol 5-phosphate (PI5P). Functionally, lipid phosphatase which dephosphorylates phosphatidylinositol 3-monophosphate (PI3P) and phosphatidylinositol 3,5-bisphosphate (PI(3,5)P2). Has also been shown to dephosphorylate phosphotyrosine- and phosphoserine-containing peptides. Negatively regulates EGFR degradation through regulation of EGFR trafficking from the late endosome to the lysosome. Plays a role in vacuolar formation and morphology. Regulates desmin intermediate filament assembly and architecture. Plays a role in mitochondrial morphology and positioning. Required for skeletal muscle maintenance but not for myogenesis. In skeletal muscles, stabilizes MTMR12 protein levels. In Homo sapiens (Human), this protein is Myotubularin.